The primary structure comprises 293 residues: MHGLIADFIHYLDVERGLARTTQVSYQQDLTTFMAWLSDQKQTTFPEDFGVIQAFLKHQNDTKAPASVSRMISALRKFYRFLLREGAIKSDPMTKIDTPKKAQHLPATLSGTEIDALMAKPDTTKPLGLRDRAIFELMYATGLRVSEVVGLRLDQLHLAMNLLQVTGKGDKERLVPISPQAADWVNRYLQESRPRLIKHQQPKAVFVNFHGHALTRQVIWKNLKAYIASVGIEKDVTPHTLRHSFATRLLENGADLRVVQELLGHSDISTTQIYTHLSNQHLVAVYHKTHPRG.

A Core-binding (CB) domain is found at 1–83 (MHGLIADFIH…ALRKFYRFLL (83 aa)). One can recognise a Tyr recombinase domain in the interval 104 to 287 (HLPATLSGTE…SNQHLVAVYH (184 aa)). Catalysis depends on residues Arg-144, Lys-168, His-239, Arg-242, and His-265. Residue Tyr-274 is the O-(3'-phospho-DNA)-tyrosine intermediate of the active site.

The protein belongs to the 'phage' integrase family. XerD subfamily. As to quaternary structure, forms a cyclic heterotetrameric complex composed of two molecules of XerC and two molecules of XerD.

The protein resides in the cytoplasm. Its function is as follows. Site-specific tyrosine recombinase, which acts by catalyzing the cutting and rejoining of the recombining DNA molecules. The XerC-XerD complex is essential to convert dimers of the bacterial chromosome into monomers to permit their segregation at cell division. It also contributes to the segregational stability of plasmids. The protein is Tyrosine recombinase XerD of Lacticaseibacillus casei (Lactobacillus casei).